The chain runs to 128 residues: Putative protein SEM1, isoform 2 (128 aa).

Residues 22 to 32 (KHGIKRGRRPS) are compositionally biased toward basic residues. The tract at residues 22 to 42 (KHGIKRGRRPSIRSPAQRARG) is disordered.

The protein is Putative protein SEM1, isoform 2 of Homo sapiens (Human).